The chain runs to 184 residues: Rubrerythrin-2 (184 aa).

In terms of domain architecture, Ferritin-like diiron spans 2-146; that stretch reads SVKNAMTADF…DAQDSAKENK (145 aa). Fe(3+)-binding residues include glutamate 19, glutamate 52, glutamate 94, glutamate 97, glutamate 128, histidine 131, cysteine 156, cysteine 159, cysteine 171, and cysteine 174. Positions 151 to 184 constitute a Rubredoxin-like domain; sequence GKVYICPVCGFTTLDENIEQCPICGVKKDKFQAF.

Fe(3+) is required as a cofactor.

The enzyme catalyses H2O2 + NADH + H(+) = NAD(+) + 2 H2O. With respect to regulation, rubredoxin (Rd) increases the NADH consumption rate by serving as an intermediary electron-transfer shuttle between NROR and Rbr2. Functions as the terminal component of an NADH peroxidase (NADH:H(2)O(2) oxidoreductase) when using NADH:rubredoxin oxidoreductase (NROR) as the electron transport intermediary from NADH to Rbr2. In Clostridium acetobutylicum (strain ATCC 824 / DSM 792 / JCM 1419 / IAM 19013 / LMG 5710 / NBRC 13948 / NRRL B-527 / VKM B-1787 / 2291 / W), this protein is Rubrerythrin-2 (rbr2).